The following is a 189-amino-acid chain: GTP cyclohydrolase 1 (189 aa).

3 residues coordinate Zn(2+): Cys-76, His-79, and Cys-149.

The protein belongs to the GTP cyclohydrolase I family. In terms of assembly, homomer.

The enzyme catalyses GTP + H2O = 7,8-dihydroneopterin 3'-triphosphate + formate + H(+). It functions in the pathway cofactor biosynthesis; 7,8-dihydroneopterin triphosphate biosynthesis; 7,8-dihydroneopterin triphosphate from GTP: step 1/1. This chain is GTP cyclohydrolase 1, found in Dehalococcoides mccartyi (strain ATCC BAA-2100 / JCM 16839 / KCTC 5957 / BAV1).